A 250-amino-acid polypeptide reads, in one-letter code: MIIFPAVDIQNGKAVRLKQGRAHESTVFAESPVDAARAWEEAGARWLHVVDLDGAFDGAAQSRRIVRDICAALAIPVQLGGGIRDMHTAEAYLEAGVSRLIIGTLALEQPTLFADMCRAFPGRVGVSLDAEGGRLKSRGWVEDTGMTVDTALPRLLDDGAAFVIYTDIERDGMQCGVNVAALEHLARLSTVPVIAAGGVATLEDIQKLYPLTLETSLMGAVSGRALYEGTLDLKEANAWIDARKNTPESA.

Residue D8 is the Proton acceptor of the active site. Residue D129 is the Proton donor of the active site.

The protein belongs to the HisA/HisF family.

The protein localises to the cytoplasm. The catalysed reaction is 1-(5-phospho-beta-D-ribosyl)-5-[(5-phospho-beta-D-ribosylamino)methylideneamino]imidazole-4-carboxamide = 5-[(5-phospho-1-deoxy-D-ribulos-1-ylimino)methylamino]-1-(5-phospho-beta-D-ribosyl)imidazole-4-carboxamide. The protein operates within amino-acid biosynthesis; L-histidine biosynthesis; L-histidine from 5-phospho-alpha-D-ribose 1-diphosphate: step 4/9. The protein is 1-(5-phosphoribosyl)-5-[(5-phosphoribosylamino)methylideneamino] imidazole-4-carboxamide isomerase of Desulfovibrio desulfuricans (strain ATCC 27774 / DSM 6949 / MB).